Reading from the N-terminus, the 193-residue chain is 7-methyl-GTP pyrophosphatase (193 aa).

The active-site Proton acceptor is aspartate 68.

It belongs to the Maf family. YceF subfamily. A divalent metal cation serves as cofactor.

The protein resides in the cytoplasm. The catalysed reaction is N(7)-methyl-GTP + H2O = N(7)-methyl-GMP + diphosphate + H(+). Its function is as follows. Nucleoside triphosphate pyrophosphatase that hydrolyzes 7-methyl-GTP (m(7)GTP). May have a dual role in cell division arrest and in preventing the incorporation of modified nucleotides into cellular nucleic acids. The protein is 7-methyl-GTP pyrophosphatase of Chromobacterium violaceum (strain ATCC 12472 / DSM 30191 / JCM 1249 / CCUG 213 / NBRC 12614 / NCIMB 9131 / NCTC 9757 / MK).